The primary structure comprises 494 residues: 3-octaprenyl-4-hydroxybenzoate carboxy-lyase (494 aa).

Asn172 serves as a coordination point for Mn(2+). Residues 175–177 (IYR), 189–191 (RWL), and 194–195 (RG) contribute to the prenylated FMN site. Residue Glu238 participates in Mn(2+) binding. Asp294 (proton donor) is an active-site residue.

This sequence belongs to the UbiD family. As to quaternary structure, homohexamer. The cofactor is prenylated FMN. It depends on Mn(2+) as a cofactor.

The protein localises to the cell membrane. It carries out the reaction a 4-hydroxy-3-(all-trans-polyprenyl)benzoate + H(+) = a 2-(all-trans-polyprenyl)phenol + CO2. The protein operates within cofactor biosynthesis; ubiquinone biosynthesis. In terms of biological role, catalyzes the decarboxylation of 3-octaprenyl-4-hydroxy benzoate to 2-octaprenylphenol, an intermediate step in ubiquinone biosynthesis. In Albidiferax ferrireducens (strain ATCC BAA-621 / DSM 15236 / T118) (Rhodoferax ferrireducens), this protein is 3-octaprenyl-4-hydroxybenzoate carboxy-lyase.